Consider the following 328-residue polypeptide: Beta-ketoacyl-[acyl-carrier-protein] synthase III (328 aa).

Catalysis depends on residues C122 and H255. Residues 256–260 (QANVR) form an ACP-binding region. N285 is an active-site residue.

It belongs to the thiolase-like superfamily. FabH family. As to quaternary structure, homodimer.

Its subcellular location is the cytoplasm. It carries out the reaction malonyl-[ACP] + acetyl-CoA + H(+) = 3-oxobutanoyl-[ACP] + CO2 + CoA. The protein operates within lipid metabolism; fatty acid biosynthesis. Catalyzes the condensation reaction of fatty acid synthesis by the addition to an acyl acceptor of two carbons from malonyl-ACP. Catalyzes the first condensation reaction which initiates fatty acid synthesis and may therefore play a role in governing the total rate of fatty acid production. Possesses both acetoacetyl-ACP synthase and acetyl transacylase activities. Its substrate specificity determines the biosynthesis of branched-chain and/or straight-chain of fatty acids. The sequence is that of Beta-ketoacyl-[acyl-carrier-protein] synthase III from Bordetella pertussis (strain Tohama I / ATCC BAA-589 / NCTC 13251).